We begin with the raw amino-acid sequence, 284 residues long: Bifunctional protein FolD (284 aa).

NADP(+) contacts are provided by residues 165-167 (GRS), S190, and V231.

Belongs to the tetrahydrofolate dehydrogenase/cyclohydrolase family. As to quaternary structure, homodimer.

It carries out the reaction (6R)-5,10-methylene-5,6,7,8-tetrahydrofolate + NADP(+) = (6R)-5,10-methenyltetrahydrofolate + NADPH. It catalyses the reaction (6R)-5,10-methenyltetrahydrofolate + H2O = (6R)-10-formyltetrahydrofolate + H(+). It participates in one-carbon metabolism; tetrahydrofolate interconversion. Functionally, catalyzes the oxidation of 5,10-methylenetetrahydrofolate to 5,10-methenyltetrahydrofolate and then the hydrolysis of 5,10-methenyltetrahydrofolate to 10-formyltetrahydrofolate. In Brevibacillus brevis (strain 47 / JCM 6285 / NBRC 100599), this protein is Bifunctional protein FolD.